The chain runs to 474 residues: Dipeptidase A (474 aa).

C6 is a catalytic residue.

This sequence belongs to the peptidase C69 family. Homooctamer.

The enzyme catalyses an L-aminoacyl-L-amino acid + H2O = 2 an L-alpha-amino acid. Its activity is regulated as follows. Inhibited by Zn(2+), Cu(2+), Ca(2+) and Cd(2+). Functionally, hydrolyzes a wide range of dipeptides but unable to hydrolyze dipeptides containing proline. Highest activity against Met-Ala. This is Dipeptidase A (pepDA) from Lactobacillus helveticus (Lactobacillus suntoryeus).